The primary structure comprises 83 residues: Lipolysis-activating peptide 1-alpha chain (83 aa).

An N-terminal signal peptide occupies residues 1-21 (MNIILFYFMPILISLPGLLAS). The LCN-type CS-alpha/beta domain maps to 22-83 (GTYPNDVYGL…LFWDVYKEHC (62 aa)). 3 cysteine pairs are disulfide-bonded: Cys-35/Cys-58, Cys-44/Cys-63, and Cys-48/Cys-65.

It belongs to the long (3 C-C) scorpion toxin superfamily. In terms of assembly, monomer (edited version) and heterodimer (non-edited version) of this alpha chain and a beta chain (AC P0CI43). As to expression, expressed by the venom gland.

The protein localises to the secreted. Functionally, the heterodimer non-edited LVP1 induces lipolysis in rat adipocytes. Induction of lipolysis by LVP1 appears to be mediated through the beta-2 adrenergic receptor pathway (ADRB2). In terms of biological role, the edited BmKBTx-like, similar to beta-toxins, may modulate voltage-gated sodium channels (Nav) and may block voltage-gated potassium channels (Kv). This Lychas mucronatus (Chinese swimming scorpion) protein is Lipolysis-activating peptide 1-alpha chain.